A 173-amino-acid polypeptide reads, in one-letter code: dCTP deaminase (173 aa).

DCTP contacts are provided by residues 97 to 102 (RSSFAR) and Asp-113. Glu-123 acts as the Proton donor/acceptor in catalysis. Tyr-155 and Gln-162 together coordinate dCTP.

Belongs to the dCTP deaminase family. In terms of assembly, homotrimer.

The catalysed reaction is dCTP + H2O + H(+) = dUTP + NH4(+). Its pathway is pyrimidine metabolism; dUMP biosynthesis; dUMP from dCTP (dUTP route): step 1/2. Its function is as follows. Catalyzes the deamination of dCTP to dUTP. The chain is dCTP deaminase from Acidianus ambivalens (Desulfurolobus ambivalens).